A 331-amino-acid polypeptide reads, in one-letter code: Nucleotide sugar transporter SLC35B4 (331 aa).

The next 11 membrane-spanning stretches (helical) occupy residues 4–24 (ALAVGLVFAGCCSNVIFLELL), 30–50 (GCGNIVTFAQFLFIAVEGFLF), 59–79 (PAIPIRYYAIMVTMFFTVSVV), 92–112 (LHMIFRSGSLIANMILGIIIL), 117–137 (SIFKYTSIALVSVGIFICTFM), 153–173 (GFQAFVWWLLGIGALTFALLM), 201–221 (ALPLPGFIFLASDIYDHAVLF), 229–249 (IPGIGVTLPIMWFYLLMNIIT), 251–267 (YVCIRGVFILTTECASL), 268–288 (TVTLVVTLRKFVSLIFSILYF), and 291–311 (PFTLWHWLGTLFVFIGTLMYT). The Mediates endoplasmic reticulum retention motif lies at 326–331 (KDNKKN).

Belongs to the nucleotide-sugar transporter family. SLC35B subfamily.

It is found in the endoplasmic reticulum membrane. The enzyme catalyses UDP-N-acetyl-alpha-D-glucosamine(in) + UDP-alpha-D-glucuronate(out) = UDP-N-acetyl-alpha-D-glucosamine(out) + UDP-alpha-D-glucuronate(in). It catalyses the reaction UDP-alpha-D-xylose(in) + UDP-alpha-D-glucuronate(out) = UDP-alpha-D-xylose(out) + UDP-alpha-D-glucuronate(in). Its function is as follows. Antiporter that transports nucleotide sugars across the endoplasmic reticulum (ER) membrane in exchange for another nucleotide sugar. May couple UDP-alpha-D-glucuronate (UDP-GlcA) or UDP-alpha-D-xylose (UDP-Xyl) efflux to UDP-alpha-D-glucuronate (UDP-GlcA) influx into the ER lumen, which in turn stimulates glucuronidation and excretion of endobiotics and xenobiotics. The protein is Nucleotide sugar transporter SLC35B4 (SLC35B4) of Macaca fascicularis (Crab-eating macaque).